Consider the following 84-residue polypeptide: Acyl carrier protein (84 aa).

In terms of domain architecture, Carrier spans 6-81 (EEILTGLAEI…DAVDYIANAT (76 aa)). Position 41 is an O-(pantetheine 4'-phosphoryl)serine (serine 41).

Belongs to the acyl carrier protein (ACP) family. In terms of processing, 4'-phosphopantetheine is transferred from CoA to a specific serine of apo-ACP by AcpS. This modification is essential for activity because fatty acids are bound in thioester linkage to the sulfhydryl of the prosthetic group.

It localises to the cytoplasm. It participates in lipid metabolism; fatty acid biosynthesis. Its function is as follows. Carrier of the growing fatty acid chain in fatty acid biosynthesis. The polypeptide is Acyl carrier protein (Acidothermus cellulolyticus (strain ATCC 43068 / DSM 8971 / 11B)).